A 364-amino-acid polypeptide reads, in one-letter code: Abhydrolase domain-containing protein C57A10.08c (364 aa).

At 1 to 8 (MYFFTISR) the chain is on the cytoplasmic side. Residues 9-29 (LTSFISYGILGALGILTFLYL) form a helical; Signal-anchor for type II membrane protein membrane-spanning segment. Over 30-364 (YDAYLAKSFQ…DKFSTTDHNI (335 aa)) the chain is Lumenal. S183 (charge relay system) is an active-site residue. N-linked (GlcNAc...) asparagine glycosylation is present at N326. The active-site Charge relay system is the H336.

Belongs to the AB hydrolase superfamily.

The protein localises to the endoplasmic reticulum membrane. This Schizosaccharomyces pombe (strain 972 / ATCC 24843) (Fission yeast) protein is Abhydrolase domain-containing protein C57A10.08c.